A 215-amino-acid polypeptide reads, in one-letter code: Adenylate kinase (215 aa).

10 to 15 contributes to the ATP binding site; that stretch reads GAGKGT. The tract at residues 30 to 59 is NMP; it reads STGDMLRAAVKAGSPLGLKVKGVMDSGGLV. Residues T31, R36, 57–59, 85–88, and Q92 contribute to the AMP site; these read GLV and GFPR. Residues 122 to 159 form an LID region; the sequence is GRRVHAASGRVYHDLHNPPKVAGKDDETGEDLIQREDD. ATP-binding positions include R123 and 132–133; that span reads VY. Positions 156 and 167 each coordinate AMP. An ATP-binding site is contributed by G201.

This sequence belongs to the adenylate kinase family. Monomer.

It localises to the cytoplasm. The enzyme catalyses AMP + ATP = 2 ADP. The protein operates within purine metabolism; AMP biosynthesis via salvage pathway; AMP from ADP: step 1/1. Its function is as follows. Catalyzes the reversible transfer of the terminal phosphate group between ATP and AMP. Plays an important role in cellular energy homeostasis and in adenine nucleotide metabolism. This is Adenylate kinase from Azotobacter vinelandii (strain DJ / ATCC BAA-1303).